Reading from the N-terminus, the 466-residue chain is Integrin-linked protein kinase homolog pat-4 (466 aa).

ANK repeat units lie at residues 50–79 (HAFS…RVNS), 83–112 (GDDT…DVNA), and 116–145 (HGMT…AVNV). Residues 210–465 (LNLITKIAES…QIIPILERMI (256 aa)) enclose the Protein kinase domain.

Belongs to the protein kinase superfamily. TKL Ser/Thr protein kinase family. As to quaternary structure, interacts (via protein kinase domain) with unc-112 (via N-terminus). Interacts (via ANK repeats) with unc-97 (via first LIM domain). Interacts (via protein kinase domain) with pat-6 (via C-terminus CH domain). May form a complex with unc-112, unc-97 and pat-6. Does not interact with integrin pat-3. Component of an integrin containing attachment complex, composed of at least pat-2, pat-3, pat-4, pat-6, unc-52, unc-97 and unc-112. Expressed in body wall muscle.

It localises to the cytoplasm. It is found in the myofibril. Its subcellular location is the sarcomere. The protein localises to the m line. The protein resides in the basal cell membrane. Functionally, probable pseudokinase that acts as an adapter protein. Component of an integrin containing attachment complex, which is required for muscle development and maintenance. Involved in the assembly of dense bodies and M lines during body wall muscle development by recruiting several of their components including integrin pat-3, cpna-1, unc-89 and unc-112 to integrin-mediated attachment sites. Plays a role in distal tip cell (DTC) migration and in oocyte development probably by regulating the actin cytoskeleton. During the formation of neuromuscular junctions at the larval stage, negatively regulates membrane protrusion from body wall muscles. May be involved in thermotolerance and lifespan. This is Integrin-linked protein kinase homolog pat-4 from Caenorhabditis elegans.